Reading from the N-terminus, the 341-residue chain is Heat-inducible transcription repressor HrcA (341 aa).

Belongs to the HrcA family.

In terms of biological role, negative regulator of class I heat shock genes (grpE-dnaK-dnaJ and groELS operons). Prevents heat-shock induction of these operons. The protein is Heat-inducible transcription repressor HrcA of Corynebacterium jeikeium (strain K411).